The chain runs to 1111 residues: Atrial natriuretic peptide-converting enzyme (1111 aa).

The Cytoplasmic segment spans residues 1–112 (MGRVSFNVRV…QKLVTANLLR (112 aa)). The short motif at 93-96 (ADSS) is the DDNN motif element. A helical; Signal-anchor for type II membrane protein membrane pass occupies residues 113-133 (FLLLVLIPCICALIVLLAILL). Topologically, residues 134–1111 (SFVGTLKKVY…QTFLQKKSQG (978 aa)) are extracellular. N-linked (GlcNAc...) asparagine glycosylation is present at asparagine 147. Residues 199-325 (GNTSTCVNIT…SDASRICFSL (127 aa)) enclose the FZ 1 domain. 31 disulfide bridges follow: cysteine 204–cysteine 264, cysteine 212–cysteine 257, cysteine 248–cysteine 288, cysteine 277–cysteine 322, cysteine 281–cysteine 305, cysteine 335–cysteine 348, cysteine 343–cysteine 361, cysteine 355–cysteine 370, cysteine 372–cysteine 384, cysteine 379–cysteine 397, cysteine 391–cysteine 406, cysteine 408–cysteine 421, cysteine 416–cysteine 434, cysteine 428–cysteine 443, cysteine 445–cysteine 458, cysteine 453–cysteine 471, cysteine 465–cysteine 480, cysteine 521–cysteine 584, cysteine 529–cysteine 577, cysteine 568–cysteine 606, cysteine 595–cysteine 636, cysteine 599–cysteine 623, cysteine 646–cysteine 658, cysteine 653–cysteine 671, cysteine 665–cysteine 680, cysteine 682–cysteine 696, cysteine 690–cysteine 709, cysteine 703–cysteine 718, cysteine 721–cysteine 733, cysteine 728–cysteine 746, and cysteine 740–cysteine 755. Asparagine 296 is a glycosylation site (N-linked (GlcNAc...) asparagine). LDL-receptor class A domains are found at residues 334–371 (LCGG…AHCN), 371–407 (NCSE…QNCD), 407–444 (DCNL…VNCS), and 444–481 (SCPS…ENCS). A glycan (N-linked (GlcNAc...) asparagine) is linked at asparagine 409. The 124-residue stretch at 516 to 639 (SNCSHCEPIT…SSDNQTCLLP (124 aa)) folds into the FZ 2 domain. Asparagine 535 is a glycosylation site (N-linked (GlcNAc...) asparagine). LDL-receptor class A domains are found at residues 645-681 (ECSP…ENCG), 681-719 (GCKE…KNCS), and 720-756 (FCQD…WGCV). The region spanning 756–851 (VTLSKNGNSS…SGSEISLLCT (96 aa)) is the SRCR domain. N-linked (GlcNAc...) asparagine glycosylation is present at asparagine 763. 4 cysteine pairs are disulfide-bonded: cysteine 855–cysteine 977, cysteine 893–cysteine 909, cysteine 991–cysteine 1056, and cysteine 1020–cysteine 1035. Residues 867–1100 (ILGGRTSRPG…FVDWIERQIY (234 aa)) enclose the Peptidase S1 domain. Catalysis depends on charge relay system residues histidine 908 and aspartate 957. Serine 1050 (charge relay system) is an active-site residue.

It belongs to the peptidase S1 family. N-glycosylated; required for processing and activation. Post-translationally, activated through proteolytic processing by a trypsin-like protease; cleaved into a N-terminal propeptide and an activated corin protease fragment. Atrial natriuretic peptide-converting enzyme, 180 kDa soluble fragment is produced by cleavage by ADAM10. Cleavage by ADAM10 to produce soluble 180 kDa soluble fragment takes place after the transmembrane region and before FZ 1. In terms of processing, a disulfide bond links the activated corin protease fragment and the N-terminal propeptide. The disulfide bond also links the activated corin protease fragment with Atrial natriuretic peptide-converting enzyme, 180 kDa soluble fragment. As to expression, specifically expressed in heart. Also detected in kidney, aorta, brain and testis. In kidney, present in epithelial cells, with segmental expression in the proximal tubule, thick ascending limb, connecting tubule, and throughout the collecting duct (at protein level).

Its subcellular location is the cell membrane. It localises to the cytoplasmic vesicle. The protein localises to the secreted. In terms of biological role, serine-type endopeptidase involved in atrial natriuretic peptide (NPPA) processing. Converts through proteolytic cleavage the non-functional propeptide NPPA into the active hormone, thereby regulating blood pressure in heart and promoting natriuresis, diuresis and vasodilation. Proteolytic cleavage of pro-NPPA also plays a role in female pregnancy by promoting trophoblast invasion and spiral artery remodeling in uterus. Also acts as a regulator of sodium reabsorption in kidney. May also process pro-NPPB the B-type natriuretic peptide. This chain is Atrial natriuretic peptide-converting enzyme (Corin), found in Rattus norvegicus (Rat).